The sequence spans 195 residues: Auxin-responsive protein IAA14 (195 aa).

Disordered stretches follow at residues 1 to 61 (MAAE…SPAS) and 85 to 107 (STAA…NKGG). The short motif at 10–14 (LRLGL) is the EAR-like (transcriptional repression) element. Positions 108 to 191 (GLYVKVSMDG…SCKKLRIMRG (84 aa)) constitute a PB1 domain.

This sequence belongs to the Aux/IAA family. In terms of assembly, homodimers and heterodimers. In terms of tissue distribution, highly expressed in flowers. Expressed in etiolated seedlings.

Its subcellular location is the nucleus. In terms of biological role, aux/IAA proteins are short-lived transcriptional factors that function as repressors of early auxin response genes at low auxin concentrations. The chain is Auxin-responsive protein IAA14 (IAA14) from Oryza sativa subsp. japonica (Rice).